A 173-amino-acid polypeptide reads, in one-letter code: MRNRAIKSFSICICQIFIIYFIFFLLLCVNRICSALSNGFNFLIIYGGTFFHSGKYSIPILDVDHQLNGNSSLGTVGLYFHVPFTPPDIIPPVPRSPNNMFLCFFSSIVFASAFVFSFIVNNVCKDFLFLSLNSGFSFTGYITGLYPLYRISRVSSLASKYCVVGTLGSDLKS.

The next 4 helical transmembrane spans lie at 9-29 (FSIC…LLCV), 32-52 (ICSA…TFFH), 100-120 (MFLC…SFIV), and 127-147 (FLFL…GLYP).

It localises to the membrane. This is an uncharacterized protein from Saccharomyces cerevisiae (strain ATCC 204508 / S288c) (Baker's yeast).